The primary structure comprises 246 residues: MyoD family inhibitor (246 aa).

2 disordered regions span residues 1–76 and 91–151; these read MYQV…LDST and GNPL…SKST. Low complexity predominate over residues 14 to 26; the sequence is APYGAPSAAPGPA. One can recognise an MDFI domain in the interval 99–246; that stretch reads LLPNDSGHPS…MECCGLCFSS (148 aa).

This sequence belongs to the MDFI family. As to quaternary structure, interacts (via C-terminus) with AXIN1 and LEF1. Interacts with CCNT2. Interacts (via C-terminus) with Piezo channel composed of PIEZO1 or PIEZO2; the interaction prolongs Piezo channel inactivation.

It localises to the nucleus. It is found in the cytoplasm. In terms of biological role, inhibits the transactivation activity of the Myod family of myogenic factors and represses myogenesis. Acts by associating with Myod family members and retaining them in the cytoplasm by masking their nuclear localization signals. Can also interfere with the DNA-binding activity of Myod family members. Plays an important role in trophoblast and chondrogenic differentiation. Regulates the transcriptional activity of TCF7L1/TCF3 by interacting directly with TCF7L1/TCF3 and preventing it from binding DNA. Binds to the axin complex, resulting in an increase in the level of free beta-catenin. Affects axin regulation of the WNT and JNK signaling pathways. Regulates the activity of mechanosensitive Piezo channel. In Homo sapiens (Human), this protein is MyoD family inhibitor (MDFI).